The sequence spans 566 residues: Proline--tRNA ligase (566 aa).

It belongs to the class-II aminoacyl-tRNA synthetase family. ProS type 1 subfamily. In terms of assembly, homodimer.

The protein localises to the cytoplasm. The catalysed reaction is tRNA(Pro) + L-proline + ATP = L-prolyl-tRNA(Pro) + AMP + diphosphate. In terms of biological role, catalyzes the attachment of proline to tRNA(Pro) in a two-step reaction: proline is first activated by ATP to form Pro-AMP and then transferred to the acceptor end of tRNA(Pro). As ProRS can inadvertently accommodate and process non-cognate amino acids such as alanine and cysteine, to avoid such errors it has two additional distinct editing activities against alanine. One activity is designated as 'pretransfer' editing and involves the tRNA(Pro)-independent hydrolysis of activated Ala-AMP. The other activity is designated 'posttransfer' editing and involves deacylation of mischarged Ala-tRNA(Pro). The misacylated Cys-tRNA(Pro) is not edited by ProRS. This is Proline--tRNA ligase from Bacillus cereus (strain Q1).